A 75-amino-acid chain; its full sequence is Defensin-like protein (75 aa).

A signal peptide spans 1 to 24; that stretch reads MEKKSIAGLCFLFLVLFVAQEVVV. Disulfide bonds link Cys-31/Cys-75, Cys-42/Cys-63, Cys-48/Cys-69, and Cys-52/Cys-71.

The protein belongs to the DEFL family.

It localises to the secreted. Its function is as follows. This protein is required for germination. This is Defensin-like protein from Vigna unguiculata (Cowpea).